The chain runs to 417 residues: UPF0761 membrane protein CV_0810 (417 aa).

A run of 7 helical transmembrane segments spans residues 52-72 (LLAL…FPVF), 79-99 (FKIM…ITVY), 110-130 (LTAA…STIE), 150-170 (MVYW…LLSW), 185-205 (LLAS…VLAL), 214-234 (FVPF…LELT), and 258-278 (IPIF…GAVF).

It belongs to the UPF0761 family.

Its subcellular location is the cell inner membrane. This chain is UPF0761 membrane protein CV_0810, found in Chromobacterium violaceum (strain ATCC 12472 / DSM 30191 / JCM 1249 / CCUG 213 / NBRC 12614 / NCIMB 9131 / NCTC 9757 / MK).